We begin with the raw amino-acid sequence, 319 residues long: ATP-dependent 6-phosphofructokinase (319 aa).

ATP contacts are provided by residues G11, 72 to 73 (RS), and 102 to 105 (GDGS). Position 103 (D103) interacts with Mg(2+). Residue 126-128 (TID) coordinates substrate. D128 (proton acceptor) is an active-site residue. R155 contacts ADP. Residues R163 and 170-172 (MGR) contribute to the substrate site. 186 to 188 (GAE) contacts ADP. Residues E223, R245, and 251–254 (HTQR) each bind substrate.

It belongs to the phosphofructokinase type A (PFKA) family. ATP-dependent PFK group I subfamily. Prokaryotic clade 'B1' sub-subfamily. Homotetramer. Mg(2+) serves as cofactor.

Its subcellular location is the cytoplasm. It catalyses the reaction beta-D-fructose 6-phosphate + ATP = beta-D-fructose 1,6-bisphosphate + ADP + H(+). Its pathway is carbohydrate degradation; glycolysis; D-glyceraldehyde 3-phosphate and glycerone phosphate from D-glucose: step 3/4. With respect to regulation, allosterically activated by ADP and other diphosphonucleosides, and allosterically inhibited by phosphoenolpyruvate. Its function is as follows. Catalyzes the phosphorylation of D-fructose 6-phosphate to fructose 1,6-bisphosphate by ATP, the first committing step of glycolysis. This chain is ATP-dependent 6-phosphofructokinase, found in Sulfurimonas denitrificans (strain ATCC 33889 / DSM 1251) (Thiomicrospira denitrificans (strain ATCC 33889 / DSM 1251)).